The sequence spans 431 residues: 23S rRNA (uracil(1939)-C(5))-methyltransferase RlmD (431 aa).

Positions 10–68 constitute a TRAM domain; that stretch reads RVTTRQIITVKVNDLDSFGQGVARHNGKALFIPGLLPEESAEVIITEDKKQFARARVSR. [4Fe-4S] cluster is bound by residues Cys81, Cys87, Cys90, and Cys161. Gln264, Phe293, Asn298, Glu314, Asn341, and Asp362 together coordinate S-adenosyl-L-methionine. Cys388 functions as the Nucleophile in the catalytic mechanism.

It belongs to the class I-like SAM-binding methyltransferase superfamily. RNA M5U methyltransferase family. RlmD subfamily.

It carries out the reaction uridine(1939) in 23S rRNA + S-adenosyl-L-methionine = 5-methyluridine(1939) in 23S rRNA + S-adenosyl-L-homocysteine + H(+). Functionally, catalyzes the formation of 5-methyl-uridine at position 1939 (m5U1939) in 23S rRNA. The protein is 23S rRNA (uracil(1939)-C(5))-methyltransferase RlmD of Salmonella paratyphi A (strain ATCC 9150 / SARB42).